Here is a 523-residue protein sequence, read N- to C-terminus: Excitatory amino acid transporter 3 (523 aa).

The Cytoplasmic portion of the chain corresponds to 1-18 (MGKPTSSGCDWRRFLRNH). A helical transmembrane segment spans residues 19–38 (WLLLSTVAAVVLGIVLGVVV). Residues 39–61 (RGHSELSNLDKFYFAFPGEILMR) are Extracellular-facing. The chain crosses the membrane as a helical span at residues 62 to 82 (MLKLVILPLIVSSMITGVAAL). Residues 83-93 (DSNVSGKIGLR) lie on the Cytoplasmic side of the membrane. Residues 94 to 114 (AVVYYFSTTVIAVILGIVLVV) traverse the membrane as a helical segment. Residues Y98, T101, and T102 each contribute to the Na(+) site. Topologically, residues 115 to 204 (SIKPGVTQKV…KTKEYKIVGL (90 aa)) are extracellular. N128, N178, and N194 each carry an N-linked (GlcNAc...) asparagine glycan. Residues 205-228 (YSDGINVLGLIIFCLVFGLVIGKM) traverse the membrane as a helical segment. Topologically, residues 229–237 (GEKGQILVD) are cytoplasmic. Residues 238–265 (FFNALSDATMKIVQIIMCYMPIGILFLI) form a helical membrane-spanning segment. At 266–285 (AGKIIEVEDWEIFRKLGLYM) the chain is on the extracellular side. The helical transmembrane segment at 286–307 (ATVLSGLAIHSLIVLPLLYFIV) threads the bilayer. Topologically, residues 308-312 (VRKNP) are cytoplasmic. An intramembrane region (discontinuously helical) is located at residues 313-343 (FRFALGMAQALLTALMISSSSATLPVTFRCA). L-aspartate is bound by residues S330 and S332. The Cytoplasmic portion of the chain corresponds to 344–352 (EEKNQVDKR). A helical transmembrane segment spans residues 353–379 (ITRFVLPVGATINMDGTALYEAVAAVF). The Na(+) site is built by G361, T363, N365, and D367. Residue T369 participates in L-aspartate binding. The Extracellular portion of the chain corresponds to 380-392 (IAQLNGLDLSIGQ). The segment at residues 393–426 (IVTISITATAASIGAAGVPQAGLVTMVIVLSAVG) is an intramembrane region (discontinuously helical). Residues S404, I405, and A407 each contribute to the Na(+) site. L-aspartate is bound at residue V410. Residues 427 to 439 (LPAEDVTLIIAVD) lie on the Extracellular side of the membrane. Residues 440–461 (WLLDRFRTMVNVLGDAFGTGIV) traverse the membrane as a helical segment. Positions 446, 447, and 450 each coordinate L-aspartate. Residues N450 and D454 each coordinate Na(+). The Cytoplasmic portion of the chain corresponds to 462 to 523 (EKLSKKELEQ…TISFTQTSQF (62 aa)). S516 and S521 each carry phosphoserine.

This sequence belongs to the dicarboxylate/amino acid:cation symporter (DAACS) (TC 2.A.23) family. SLC1A1 subfamily. In terms of assembly, homotrimer. Interacts with ARL6IP5. Interacts with RTN2 (via N-terminus); the interaction promotes cell surface expression of SLC1A1. Interacts with SORCS2; this interaction is important for normal expression at the cell membrane. As to expression, detected on neurons in the brain cortex, dentate gyrus and hippocampus CA2 region (at protein level). Expressed in whole brain, brain cortex, hippocampus, cerebellum, lung, kidney, small intestine and skeletal muscle. Expressed in the renal outer medulla, medullary ray and cortex (at protein level).

It localises to the cell membrane. Its subcellular location is the apical cell membrane. The protein localises to the synapse. The protein resides in the synaptosome. It is found in the early endosome membrane. It localises to the late endosome membrane. Its subcellular location is the recycling endosome membrane. The catalysed reaction is K(+)(in) + L-glutamate(out) + 3 Na(+)(out) + H(+)(out) = K(+)(out) + L-glutamate(in) + 3 Na(+)(in) + H(+)(in). It catalyses the reaction K(+)(in) + L-aspartate(out) + 3 Na(+)(out) + H(+)(out) = K(+)(out) + L-aspartate(in) + 3 Na(+)(in) + H(+)(in). It carries out the reaction D-aspartate(out) + K(+)(in) + 3 Na(+)(out) + H(+)(out) = D-aspartate(in) + K(+)(out) + 3 Na(+)(in) + H(+)(in). The enzyme catalyses K(+)(in) + L-cysteine(out) + 3 Na(+)(out) + H(+)(out) = K(+)(out) + L-cysteine(in) + 3 Na(+)(in) + H(+)(in). Functionally, sodium-dependent, high-affinity amino acid transporter that mediates the uptake of L-glutamate and also L-aspartate and D-aspartate. Can also transport L-cysteine. Functions as a symporter that transports one amino acid molecule together with two or three Na(+) ions and one proton, in parallel with the counter-transport of one K(+) ion. Mediates Cl(-) flux that is not coupled to amino acid transport; this avoids the accumulation of negative charges due to aspartate and Na(+) symport. Plays an important role in L-glutamate and L-aspartate reabsorption in renal tubuli. Plays a redundant role in the rapid removal of released glutamate from the synaptic cleft, which is essential for terminating the postsynaptic action of glutamate. Contributes to glutathione biosynthesis and protection against oxidative stress via its role in L-glutamate and L-cysteine transport. Negatively regulated by ARL6IP5. The polypeptide is Excitatory amino acid transporter 3 (Slc1a1) (Mus musculus (Mouse)).